A 283-amino-acid chain; its full sequence is NFU1 iron-sulfur cluster scaffold homolog, mitochondrial (283 aa).

The N-terminal 65 residues, 1 to 65 (MSKFLSQAAI…ELRMPVACRR (65 aa)), are a transit peptide targeting the mitochondrion. The nifU stretch occupies residues 182 to 250 (IKELLDTRIR…IPEVESVEQV (69 aa)). Residues Cys219 and Cys222 each contribute to the [4Fe-4S] cluster site.

The protein belongs to the NifU family.

It is found in the mitochondrion. Molecular scaffold for [Fe-S] cluster assembly of mitochondrial iron-sulfur proteins. The sequence is that of NFU1 iron-sulfur cluster scaffold homolog, mitochondrial from Drosophila sechellia (Fruit fly).